A 55-amino-acid chain; its full sequence is Lantibiotic nisin-U (55 aa).

Positions 1–24 (MNNEDFNLDLIKISKENNSGASPR) are excised as a propeptide. Thr-26 is subject to 2,3-didehydrobutyrine. The lanthionine (Ser-Cys) cross-link spans 27–31 (SKSLC). Ser-29 carries the post-translational modification 2,3-didehydroalanine (Ser). 4 consecutive cross-links (beta-methyllanthionine (Thr-Cys)) follow at residues 32 to 35 (TPGC), 37 to 43 (TGILMTC), 47 to 50 (TATC), and 49 to 52 (TCGC). A 2,3-didehydrobutyrine modification is found at Thr-42.

In terms of processing, maturation of lantibiotics involves the enzymatic conversion of Thr, and Ser into dehydrated AA and the formation of thioether bonds with cysteine. This is followed by membrane translocation and cleavage of the modified precursor.

The protein resides in the secreted. Functionally, lanthionine-containing peptide antibiotic (lantibiotic) active on Gram-positive bacteria. The bactericidal activity of lantibiotics is based on depolarization of energized bacterial cytoplasmic membranes, initiated by the formation of aqueous transmembrane pores. This is Lantibiotic nisin-U (nsuA) from Streptococcus uberis.